We begin with the raw amino-acid sequence, 212 residues long: Large ribosomal subunit protein uL4 (212 aa).

This sequence belongs to the universal ribosomal protein uL4 family. Part of the 50S ribosomal subunit.

In terms of biological role, one of the primary rRNA binding proteins, this protein initially binds near the 5'-end of the 23S rRNA. It is important during the early stages of 50S assembly. It makes multiple contacts with different domains of the 23S rRNA in the assembled 50S subunit and ribosome. Its function is as follows. Forms part of the polypeptide exit tunnel. This chain is Large ribosomal subunit protein uL4, found in Phenylobacterium zucineum (strain HLK1).